The following is a 456-amino-acid chain: 26S proteasome non-ATPase regulatory subunit 12 (456 aa).

At Ala2 the chain carries N-acetylalanine. A Glycyl lysine isopeptide (Lys-Gly) (interchain with G-Cter in SUMO1); alternate cross-link involves residue Lys92. Lys92 participates in a covalent cross-link: Glycyl lysine isopeptide (Lys-Gly) (interchain with G-Cter in SUMO2); alternate. Residues Lys221 and Lys368 each carry the N6-acetyllysine modification. The PCI domain maps to 242 to 420; it reads SICKHYRAIY…GIINFQRPKD (179 aa).

This sequence belongs to the proteasome subunit p55 family. In terms of assembly, component of the 19S proteasome regulatory particle complex. The 26S proteasome consists of a 20S core particle (CP) and two 19S regulatory subunits (RP). The regulatory particle is made of a lid composed of 9 subunits including PSMD12, a base containing 6 ATPases and few additional components. Interacts with ERCC6.

Component of the 26S proteasome, a multiprotein complex involved in the ATP-dependent degradation of ubiquitinated proteins. This complex plays a key role in the maintenance of protein homeostasis by removing misfolded or damaged proteins, which could impair cellular functions, and by removing proteins whose functions are no longer required. Therefore, the proteasome participates in numerous cellular processes, including cell cycle progression, apoptosis, or DNA damage repair. The chain is 26S proteasome non-ATPase regulatory subunit 12 (PSMD12) from Homo sapiens (Human).